The chain runs to 236 residues: Uridylate kinase (236 aa).

12 to 15 serves as a coordination point for ATP; sequence KLSG. The tract at residues 20 to 25 is involved in allosteric activation by GTP; that stretch reads GEKGFG. Gly54 lines the UMP pocket. Positions 55 and 59 each coordinate ATP. UMP-binding positions include Asp72 and 133–140; that span reads TGNPYFST. ATP is bound by residues Asn161, Tyr166, and Asp169.

The protein belongs to the UMP kinase family. Homohexamer.

It is found in the cytoplasm. It catalyses the reaction UMP + ATP = UDP + ADP. It functions in the pathway pyrimidine metabolism; CTP biosynthesis via de novo pathway; UDP from UMP (UMPK route): step 1/1. Its activity is regulated as follows. Allosterically activated by GTP. Inhibited by UTP. Catalyzes the reversible phosphorylation of UMP to UDP. This chain is Uridylate kinase, found in Alkaliphilus metalliredigens (strain QYMF).